Reading from the N-terminus, the 183-residue chain is Thymidine kinase (183 aa).

11–18 contacts ATP; sequence GPMFSGKT. The active-site Proton acceptor is the Glu89. Phe119 contacts substrate. Cys144 and Cys147 together coordinate Zn(2+). 163-167 contacts substrate; that stretch reads VMDIG. Zn(2+) is bound by residues Cys176 and Cys179.

This sequence belongs to the thymidine kinase family.

The enzyme catalyses thymidine + ATP = dTMP + ADP + H(+). The protein is Thymidine kinase (TK) of Vertebrata (FPV).